Consider the following 360-residue polypeptide: Phospho-N-acetylmuramoyl-pentapeptide-transferase (360 aa).

Helical transmembrane passes span arginine 25 to isoleucine 45, threonine 73 to leucine 93, tyrosine 97 to tyrosine 117, tryptophan 132 to alanine 152, threonine 167 to serine 187, glycine 199 to serine 219, alanine 236 to phenylalanine 256, valine 263 to isoleucine 283, valine 288 to valine 308, and valine 338 to lysine 358.

This sequence belongs to the glycosyltransferase 4 family. MraY subfamily. The cofactor is Mg(2+).

The protein localises to the cell inner membrane. The catalysed reaction is UDP-N-acetyl-alpha-D-muramoyl-L-alanyl-gamma-D-glutamyl-meso-2,6-diaminopimeloyl-D-alanyl-D-alanine + di-trans,octa-cis-undecaprenyl phosphate = di-trans,octa-cis-undecaprenyl diphospho-N-acetyl-alpha-D-muramoyl-L-alanyl-D-glutamyl-meso-2,6-diaminopimeloyl-D-alanyl-D-alanine + UMP. The protein operates within cell wall biogenesis; peptidoglycan biosynthesis. Catalyzes the initial step of the lipid cycle reactions in the biosynthesis of the cell wall peptidoglycan: transfers peptidoglycan precursor phospho-MurNAc-pentapeptide from UDP-MurNAc-pentapeptide onto the lipid carrier undecaprenyl phosphate, yielding undecaprenyl-pyrophosphoryl-MurNAc-pentapeptide, known as lipid I. The sequence is that of Phospho-N-acetylmuramoyl-pentapeptide-transferase from Azotobacter vinelandii (strain DJ / ATCC BAA-1303).